A 134-amino-acid polypeptide reads, in one-letter code: Small ribosomal subunit protein uS8 (134 aa).

The protein belongs to the universal ribosomal protein uS8 family. In terms of assembly, part of the 30S ribosomal subunit. Contacts proteins S5 and S12.

One of the primary rRNA binding proteins, it binds directly to 16S rRNA central domain where it helps coordinate assembly of the platform of the 30S subunit. In Kosmotoga olearia (strain ATCC BAA-1733 / DSM 21960 / TBF 19.5.1), this protein is Small ribosomal subunit protein uS8.